Here is a 529-residue protein sequence, read N- to C-terminus: NADPH-dependent thioredoxin reductase 3 (529 aa).

Residues 1 to 67 (MAASPKIGIG…SSDSLRLRVS (67 aa)) constitute a chloroplast transit peptide. Residues 54 to 78 (TRTRSSDSLRLRVSATANSPSSSSS) form a disordered region. Residues 64 to 78 (LRVSATANSPSSSSS) are compositionally biased toward low complexity. Residues 91-94 (SGPA), 113-120 (EGYQMGGV), Asn-133, Val-166, and Cys-220 each bind FAD. A disulfide bridge connects residues Cys-217 and Cys-220. Residues Thr-240, Arg-265, Ile-324, and Tyr-344 each coordinate NADP(+). FAD contacts are provided by residues Asp-364 and 371–374 (RQAV). Residue Arg-371 coordinates NADP(+). The 127-residue stretch at 403–529 (PQTEEAKKEF…EYREFIEANK (127 aa)) folds into the Thioredoxin domain. Catalysis depends on nucleophile residues Cys-454 and Cys-457. A disulfide bond links Cys-454 and Cys-457.

Belongs to the class-II pyridine nucleotide-disulfide oxidoreductase family. As to quaternary structure, may homodimerize. Interacts with the 2-Cys peroxiredoxin BAS1. FAD serves as cofactor.

It localises to the plastid. The protein localises to the chloroplast. The catalysed reaction is [thioredoxin]-dithiol + NADP(+) = [thioredoxin]-disulfide + NADPH + H(+). Thioredoxin reductase (TR) that exhibits both TR and thioredoxin (Trx) activities. Contains a C-terminal functional Trx domain. Functions as an electron donor for plastidial 2-Cys peroxiredoxins and participates in a NADPH-dependent hydrogen peroxide scavenging system in chloroplasts in the dark. Required for chlorophyll biosynthesis and biogenesis of the photosynthetic apparatus. Activates aerobic cyclase which converts Mg-protoporhyrin monomethyl ester into protochlorophyllide. Involved in a light-dependent regulation of starch biosynthesis by redox activation of the ADP-glucose pyrophosphorylase (AGPase), a central enzyme of starch synthesis. This Arabidopsis thaliana (Mouse-ear cress) protein is NADPH-dependent thioredoxin reductase 3.